A 439-amino-acid polypeptide reads, in one-letter code: Protein pop-1 (439 aa).

Residues 1–38 (MMADEELGDEVKVFRRDEDADDDPMISGETSEQQLADD) are disordered. Residues 9–18 (DEVKVFRRDE) show a composition bias toward basic and acidic residues. The tract at residues 87 to 138 (SGLPIMFPMVVPQYLSPNPNINMMNMMTMRAAMAGAPLSPAFPAMFSPNPLF) is involved in nuclear asymmetry. Serine 125 bears the Phosphoserine; by LIT1 mark. Positions 199-269 (IKKPLNAFMW…SHKEKYPQWS (71 aa)) form a DNA-binding region, HMG box. Residues 254–265 (AKKDRESHKEKY) show a composition bias toward basic and acidic residues. Disordered stretches follow at residues 254–298 (AKKD…NNDQ), 329–365 (RSGSELNDGHDGRGTSGGCSSSSESSSPNNNQPMPMN), and 385–439 (SAHL…VCTL). The segment covering 277-286 (NKKKPKRKRD) has biased composition (basic residues). 2 stretches are compositionally biased toward low complexity: residues 346–365 (GCSSSSESSSPNNNQPMPMN) and 385–400 (SAHLASSHSTGSSGTS). Residues 409–420 (SESDVDEDEDID) show a composition bias toward acidic residues. Residues 422-439 (TITQQTQEYIMQESVCTL) are compositionally biased toward polar residues.

The protein belongs to the TCF/LEF family. Interacts with hda-1. Interacts with bar-1. Interacts with par-5; the interaction is direct and is enhanced by lit-1-mediated pop-1 phosphorylation. The interaction also leads to the subsequent nuclear export of pop-1. Interacts (when phosphorylated on Ser-125) with lit-1; the interaction is dependent on the beta-catenin-lit-1 complex. Interacts with wrm-1. Post-translationally, phosphorylated on Ser-125 by lit-1 in the beta-catenin-lit-1 complex. Phosphorylation promotes the interaction of pop-1 and par-5 and the subsequent translocation of pop-1 from the nucleus to the cytoplasm.

It is found in the nucleus. Its subcellular location is the cytoplasm. Functionally, part of the Wnt signaling pathway essential for the specification of the mesodermal cell fate in early embryos. Required for asymmetrical division of somatic gonadal precursor descendants which initiate axis formation required to control organ shape. Similarly, involved in asymmetrical division of seam cells, a stem cell-like lineage. Represses expression of target genes via its interaction with hda-1 histone deacetylase. Required for specification of the M lineage-derived coelomocyte and sex myoblast fate. Regulates coelomocyte fate by positively regulating proliferation and ceh-34 and possibly eya-1 expression in M.dlpa and M.drpa precursors. The protein is Protein pop-1 of Caenorhabditis briggsae.